The sequence spans 172 residues: MAAAGVTAKAGGGTSAAAASLIRARSPAWPRRAVSCSLARGTGAPKCGSDSTPPPPLPRRRSRARRGHLGNGDRPSAGATVGGEGQASQIGGGGGGGGGRRNATGRGRRRRQGGAGSAVKCRRDSVLEPGLASSPGVAPAGGSGGLWSGAGLCSGLGARGFPGGRRSGRDAG.

Residues 1 to 28 are compositionally biased toward low complexity; the sequence is MAAAGVTAKAGGGTSAAAASLIRARSPA. The disordered stretch occupies residues 1–172; it reads MAAAGVTAKA…GGRRSGRDAG (172 aa). Over residues 58–68 the composition is skewed to basic residues; it reads PRRRSRARRGH. A compositionally biased stretch (gly residues) spans 80–100; that stretch reads TVGGEGQASQIGGGGGGGGGR. Positions 129 to 138 are enriched in low complexity; sequence PGLASSPGVA. A compositionally biased stretch (gly residues) spans 139 to 165; the sequence is PAGGSGGLWSGAGLCSGLGARGFPGGR.

This is an uncharacterized protein from Homo sapiens (Human).